Consider the following 313-residue polypeptide: GTP cyclohydrolase MptA (313 aa).

The protein belongs to the GTP cyclohydrolase IV family. Homodimer. It depends on Fe(2+) as a cofactor.

It catalyses the reaction GTP + H2O = 7,8-dihydroneopterin 2',3'-cyclic phosphate + formate + diphosphate + H(+). The protein operates within cofactor biosynthesis; 5,6,7,8-tetrahydromethanopterin biosynthesis. In terms of biological role, converts GTP to 7,8-dihydro-D-neopterin 2',3'-cyclic phosphate, the first intermediate in the biosynthesis of coenzyme methanopterin. In Methanoculleus marisnigri (strain ATCC 35101 / DSM 1498 / JR1), this protein is GTP cyclohydrolase MptA.